A 774-amino-acid polypeptide reads, in one-letter code: Lysyl oxidase homolog 2 (774 aa).

The N-terminal stretch at 1 to 25 is a signal peptide; the sequence is MERRGSSCLCRCLALLALLPTLSLA. 4 SRCR domains span residues 58–159, 188–302, 326–425, and 435–544; these read LRLA…VVCS, IRAI…VSCV, VRLR…VRCN, and LRLN…VACS. 9 cysteine pairs are disulfide-bonded: cysteine 84-cysteine 148, cysteine 97-cysteine 158, cysteine 128-cysteine 138, cysteine 218-cysteine 291, cysteine 231-cysteine 301, cysteine 265-cysteine 275, cysteine 351-cysteine 414, cysteine 364-cysteine 424, and cysteine 395-cysteine 405. N-linked (GlcNAc...) asparagine glycosylation occurs at asparagine 288. The N-linked (GlcNAc...) asparagine glycan is linked to asparagine 455. 3 disulfide bridges follow: cysteine 464–cysteine 530, cysteine 477–cysteine 543, and cysteine 511–cysteine 521. The tract at residues 548–751 is lysyl-oxidase like; the sequence is PDLVLNAEIV…WMYNCHIGGS (204 aa). Aspartate 549 and leucine 550 together coordinate Ca(2+). Cystine bridges form between cysteine 573–cysteine 625, cysteine 579–cysteine 695, cysteine 657–cysteine 673, and cysteine 663–cysteine 685. Residues histidine 626, histidine 628, and histidine 630 each coordinate Cu cation. An N-linked (GlcNAc...) asparagine glycan is attached at asparagine 644. A cross-link (lysine tyrosylquinone (Lys-Tyr)) is located at residues 653 to 689; the sequence is KASFCLEDTECEGDIQKSYECANFGEQGITMGCWDMY. Tyrosine 689 bears the 2',4',5'-topaquinone mark. Ca(2+) contacts are provided by glutamate 722, aspartate 724, asparagine 727, and asparagine 728. Cysteine 732 and cysteine 746 are disulfide-bonded.

Belongs to the lysyl oxidase family. In terms of assembly, component of some chromatin repressor complex. Interacts with SNAI1. Interacts with TAF10. Interacts with HSPA5. Interacts with EFEMP2. Cu cation is required as a cofactor. Lysine tyrosylquinone residue serves as cofactor. Post-translationally, the lysine tyrosylquinone cross-link (LTQ) is generated by condensation of the epsilon-amino group of a lysine with a topaquinone produced by oxidation of tyrosine. In terms of processing, N-glycosylated. N-glycosylation on Asn-455 and Asn-644 may be essential for proper folding and secretion; may be composed of a fucosylated carbohydrates attached to a trimannose N-linked glycan core.

It localises to the secreted. It is found in the extracellular space. The protein resides in the extracellular matrix. The protein localises to the basement membrane. Its subcellular location is the nucleus. It localises to the chromosome. It is found in the endoplasmic reticulum. It catalyses the reaction L-lysyl-[protein] + O2 + H2O = (S)-2-amino-6-oxohexanoyl-[protein] + H2O2 + NH4(+). Its activity is regulated as follows. Specifically inhibited by a mouse monoclonal antibody AB0023, inhibition occurs in a non-competitive manner. Functionally, mediates the post-translational oxidative deamination of lysine residues on target proteins leading to the formation of deaminated lysine (allysine). Acts as a transcription corepressor and specifically mediates deamination of trimethylated 'Lys-4' of histone H3 (H3K4me3), a specific tag for epigenetic transcriptional activation. Shows no activity against histone H3 when it is trimethylated on 'Lys-9' (H3K9me3) or 'Lys-27' (H3K27me3) or when 'Lys-4' is monomethylated (H3K4me1) or dimethylated (H3K4me2). Also mediates deamination of methylated TAF10, a member of the transcription factor IID (TFIID) complex, which induces release of TAF10 from promoters, leading to inhibition of TFIID-dependent transcription. LOXL2-mediated deamination of TAF10 results in transcriptional repression of genes required for embryonic stem cell pluripotency including POU5F1/OCT4, NANOG, KLF4 and SOX2. Involved in epithelial to mesenchymal transition (EMT) via interaction with SNAI1 and participates in repression of E-cadherin CDH1, probably by mediating deamination of histone H3. During EMT, involved with SNAI1 in negatively regulating pericentromeric heterochromatin transcription. SNAI1 recruits LOXL2 to pericentromeric regions to oxidize histone H3 and repress transcription which leads to release of heterochromatin component CBX5/HP1A, enabling chromatin reorganization and acquisition of mesenchymal traits. Interacts with the endoplasmic reticulum protein HSPA5 which activates the IRE1-XBP1 pathway of the unfolded protein response, leading to expression of several transcription factors involved in EMT and subsequent EMT induction. When secreted into the extracellular matrix, promotes cross-linking of extracellular matrix proteins by mediating oxidative deamination of peptidyl lysine residues in precursors to fibrous collagen and elastin. Acts as a regulator of sprouting angiogenesis, probably via collagen IV scaffolding. Acts as a regulator of chondrocyte differentiation, probably by regulating expression of factors that control chondrocyte differentiation. This is Lysyl oxidase homolog 2 (LOXL2) from Bos taurus (Bovine).